The sequence spans 364 residues: Dual-specificity RNA methyltransferase RlmN (364 aa).

Glu-91 (proton acceptor) is an active-site residue. The 237-residue stretch at Glu-97–Asp-333 folds into the Radical SAM core domain. Residues Cys-104 and Cys-338 are joined by a disulfide bond. [4Fe-4S] cluster contacts are provided by Cys-111, Cys-115, and Cys-118. Residues Gly-164–Glu-165, Ser-196, Ser-218–His-220, and Asn-295 contribute to the S-adenosyl-L-methionine site. The S-methylcysteine intermediate role is filled by Cys-338.

Belongs to the radical SAM superfamily. RlmN family. It depends on [4Fe-4S] cluster as a cofactor.

It is found in the cytoplasm. The enzyme catalyses adenosine(2503) in 23S rRNA + 2 reduced [2Fe-2S]-[ferredoxin] + 2 S-adenosyl-L-methionine = 2-methyladenosine(2503) in 23S rRNA + 5'-deoxyadenosine + L-methionine + 2 oxidized [2Fe-2S]-[ferredoxin] + S-adenosyl-L-homocysteine. The catalysed reaction is adenosine(37) in tRNA + 2 reduced [2Fe-2S]-[ferredoxin] + 2 S-adenosyl-L-methionine = 2-methyladenosine(37) in tRNA + 5'-deoxyadenosine + L-methionine + 2 oxidized [2Fe-2S]-[ferredoxin] + S-adenosyl-L-homocysteine. Functionally, specifically methylates position 2 of adenine 2503 in 23S rRNA and position 2 of adenine 37 in tRNAs. m2A2503 modification seems to play a crucial role in the proofreading step occurring at the peptidyl transferase center and thus would serve to optimize ribosomal fidelity. In Dechloromonas aromatica (strain RCB), this protein is Dual-specificity RNA methyltransferase RlmN.